The following is a 283-amino-acid chain: GTPase Era (283 aa).

The Era-type G domain maps to 7–175 (YCGHVIIVGK…KNIIKSYLPE (169 aa)). The interval 15–22 (GKANVGKS) is G1. Residue 15 to 22 (GKANVGKS) participates in GTP binding. Positions 41–45 (NTTQS) are G2. Positions 62-65 (DTPG) are G3. Residues 62–66 (DTPGV) and 124–127 (NKID) contribute to the GTP site. Residues 124–127 (NKID) form a G4 region. Residues 154-156 (ISA) are G5. The 86-residue stretch at 198-283 (IREQLILFLG…HLVLWVKDKN (86 aa)) folds into the KH type-2 domain.

It belongs to the TRAFAC class TrmE-Era-EngA-EngB-Septin-like GTPase superfamily. Era GTPase family. Monomer.

The protein resides in the cytoplasm. The protein localises to the cell membrane. Functionally, an essential GTPase that binds both GDP and GTP, with rapid nucleotide exchange. Plays a role in 16S rRNA processing and 30S ribosomal subunit biogenesis and possibly also in cell cycle regulation and energy metabolism. The sequence is that of GTPase Era from Buchnera aphidicola subsp. Acyrthosiphon pisum (strain Tuc7).